The sequence spans 621 residues: Very-long-chain aldehyde decarbonylase GL1-5 (621 aa).

The next 5 membrane-spanning stretches (helical) occupy residues 99–119 (IILS…GQHL), 126–146 (GAGL…YWFH), 186–206 (LLFS…IIAF), 224–244 (FELV…LMYT), and 332–352 (MWPL…SFTV). The Fatty acid hydroxylase domain maps to 138 to 272 (VEFLYYWFHR…MPFYDYIYNT (135 aa)).

Belongs to the sterol desaturase family. As to quaternary structure, homodimer.

Its subcellular location is the endoplasmic reticulum membrane. It carries out the reaction a long-chain fatty aldehyde + 2 NADPH + O2 + H(+) = a long-chain alkane + formate + 2 NADP(+) + H2O. In terms of biological role, aldehyde decarbonylase involved in the conversion of aldehydes to alkanes. Core component of a very-long-chain alkane synthesis complex. The sequence is that of Very-long-chain aldehyde decarbonylase GL1-5 from Oryza sativa subsp. indica (Rice).